A 460-amino-acid chain; its full sequence is Cysteine--tRNA ligase (460 aa).

Cysteine 28 lines the Zn(2+) pocket. Residues 30-40 carry the 'HIGH' region motif; that stretch reads MTVYDYCHLGH. The Zn(2+) site is built by cysteine 209, histidine 234, and glutamate 238. Residues 266–270 carry the 'KMSKS' region motif; it reads KMSKS. Lysine 269 lines the ATP pocket.

This sequence belongs to the class-I aminoacyl-tRNA synthetase family. Monomer. Zn(2+) serves as cofactor.

It is found in the cytoplasm. It carries out the reaction tRNA(Cys) + L-cysteine + ATP = L-cysteinyl-tRNA(Cys) + AMP + diphosphate. In Pseudomonas putida (strain GB-1), this protein is Cysteine--tRNA ligase.